Here is a 289-residue protein sequence, read N- to C-terminus: ATP synthase gamma chain (289 aa).

The protein belongs to the ATPase gamma chain family. F-type ATPases have 2 components, CF(1) - the catalytic core - and CF(0) - the membrane proton channel. CF(1) has five subunits: alpha(3), beta(3), gamma(1), delta(1), epsilon(1). CF(0) has three main subunits: a, b and c.

The protein resides in the cell inner membrane. In terms of biological role, produces ATP from ADP in the presence of a proton gradient across the membrane. The gamma chain is believed to be important in regulating ATPase activity and the flow of protons through the CF(0) complex. This Acinetobacter baylyi (strain ATCC 33305 / BD413 / ADP1) protein is ATP synthase gamma chain.